Consider the following 106-residue polypeptide: Glutaredoxin-1 (106 aa).

A1 carries the post-translational modification N-acetylalanine. The Glutaredoxin domain maps to 2–105 (QEFVNSKIQP…ARLKEMGALR (104 aa)). Residue K8 is modified to N6-succinyllysine. 2 disulfides stabilise this stretch: C22/C25 and C78/C82.

Belongs to the glutaredoxin family.

It is found in the cytoplasm. Its function is as follows. Has a glutathione-disulfide oxidoreductase activity in the presence of NADPH and glutathione reductase. Reduces low molecular weight disulfides and proteins. The sequence is that of Glutaredoxin-1 (GLRX) from Oryctolagus cuniculus (Rabbit).